A 3120-amino-acid polypeptide reads, in one-letter code: DNA-directed RNA polymerase subunit beta'' (3120 aa).

The Zn(2+) site is built by cysteine 323, cysteine 396, cysteine 403, and cysteine 406. The interval phenylalanine 595–phenylalanine 1130 is insert-1. Positions lysine 1796–leucine 2346 are insert-2. The insert-3 stretch occupies residues asparagine 2422–threonine 2610. The insert-4 stretch occupies residues phenylalanine 2726–leucine 2801. Residues alanine 2856–aspartate 2996 are insert-5. The tract at residues glutamate 2926–valine 2956 is disordered. The segment covering lysine 2932 to asparagine 2946 has biased composition (polar residues).

It belongs to the RNA polymerase beta' chain family. RpoC2 subfamily. As to quaternary structure, in plastids the minimal PEP RNA polymerase catalytic core is composed of four subunits: alpha, beta, beta', and beta''. When a (nuclear-encoded) sigma factor is associated with the core the holoenzyme is formed, which can initiate transcription. The cofactor is Zn(2+).

It is found in the plastid. The protein localises to the chloroplast. It catalyses the reaction RNA(n) + a ribonucleoside 5'-triphosphate = RNA(n+1) + diphosphate. DNA-dependent RNA polymerase catalyzes the transcription of DNA into RNA using the four ribonucleoside triphosphates as substrates. This Chlamydomonas reinhardtii (Chlamydomonas smithii) protein is DNA-directed RNA polymerase subunit beta''.